We begin with the raw amino-acid sequence, 132 residues long: EF-hand calcium-binding domain-containing protein 10 (132 aa).

EF-hand domains lie at 64-99 and 120-132; these read MDNSNTVSMFEMMDMAGRGCISFVQYKEALKNLGLC and EMNKRMEKMWSMF.

In Mus musculus (Mouse), this protein is EF-hand calcium-binding domain-containing protein 10 (Efcab10).